Consider the following 288-residue polypeptide: Bifunctional protein FolD (288 aa).

Residues 166–168 and I232 each bind NADP(+); that span reads GAS.

Belongs to the tetrahydrofolate dehydrogenase/cyclohydrolase family. Homodimer.

The enzyme catalyses (6R)-5,10-methylene-5,6,7,8-tetrahydrofolate + NADP(+) = (6R)-5,10-methenyltetrahydrofolate + NADPH. It catalyses the reaction (6R)-5,10-methenyltetrahydrofolate + H2O = (6R)-10-formyltetrahydrofolate + H(+). Its pathway is one-carbon metabolism; tetrahydrofolate interconversion. Its function is as follows. Catalyzes the oxidation of 5,10-methylenetetrahydrofolate to 5,10-methenyltetrahydrofolate and then the hydrolysis of 5,10-methenyltetrahydrofolate to 10-formyltetrahydrofolate. The protein is Bifunctional protein FolD of Shigella dysenteriae serotype 1 (strain Sd197).